The chain runs to 108 residues: CDGSH iron-sulfur domain-containing protein 1 (108 aa).

The helical; Signal-anchor for type III membrane protein transmembrane segment at 13–31 threads the bilayer; that stretch reads WIAAVTFAAGTAALGYLAY. Residues 32 to 108 are Cytoplasmic-facing; the sequence is KKFYAKESRT…GPLIIKKKET (77 aa). Residue lysine 42 forms a Glycyl lysine isopeptide (Lys-Gly) (interchain with G-Cter in ubiquitin) linkage. Lysine 55 (schiff-base intermediate with pyridoxal 5'-phosphate) is an active-site residue. N6-acetyllysine; alternate is present on residues lysine 55 and lysine 68. Glycyl lysine isopeptide (Lys-Gly) (interchain with G-Cter in ubiquitin); alternate cross-links involve residues lysine 55 and lysine 68. [2Fe-2S] cluster is bound by residues cysteine 72 and cysteine 74. Residues lysine 78 and lysine 79 each participate in a glycyl lysine isopeptide (Lys-Gly) (interchain with G-Cter in ubiquitin) cross-link. [2Fe-2S] cluster contacts are provided by cysteine 83 and histidine 87. Lysine 89 is covalently cross-linked (Glycyl lysine isopeptide (Lys-Gly) (interchain with G-Cter in ubiquitin)). Lysine 104 bears the N6-acetyllysine; alternate mark. Lysine 104 participates in a covalent cross-link: Glycyl lysine isopeptide (Lys-Gly) (interchain with G-Cter in ubiquitin); alternate. Residues lysine 105 and lysine 106 each participate in a glycyl lysine isopeptide (Lys-Gly) (interchain with G-Cter in ubiquitin) cross-link.

It belongs to the CISD protein family. As to quaternary structure, homodimer. The cofactor is [2Fe-2S] cluster. Pyridoxal 5'-phosphate serves as cofactor. In terms of processing, ubiquitinated by PRKN during mitophagy, leading to its degradation and enhancement of mitophagy. Deubiquitinated by USP30.

The protein resides in the mitochondrion outer membrane. It catalyses the reaction L-cysteine + 2-oxoglutarate = 2-oxo-3-sulfanylpropanoate + L-glutamate. L-cysteine transaminase that catalyzes the reversible transfer of the amino group from L-cysteine to the alpha-keto acid 2-oxoglutarate to respectively form 2-oxo-3-sulfanylpropanoate and L-glutamate. The catalytic cycle occurs in the presence of pyridoxal 5'-phosphate (PLP) cofactor that facilitates transamination by initially forming an internal aldimine with the epsilon-amino group of active site Lys-55 residue on the enzyme (PLP-enzyme aldimine), subsequently displaced by formation of an external aldimine with the substrate amino group (PLP-L-cysteine aldimine). The external aldimine is further deprotonated to form a carbanion intermediate, which in the presence of 2-oxoglutarate regenerates PLP yielding final products 2-oxo-3-sulfanylpropanoate and L-glutamate. The proton transfer in carbanion intermediate is suggested to be controlled by the active site lysine residue, whereas PLP stabilizes carbanion structure through electron delocalization, also known as the electron sink effect. Plays a key role in regulating maximal capacity for electron transport and oxidative phosphorylation. May be involved in iron-sulfur cluster shuttling and/or in redox reactions. Can transfer the [2Fe-2S] cluster to an apo-acceptor protein only when in the oxidation state, likely serving as a redox sensor that regulates mitochondrial iron-sulfur cluster assembly and iron trafficking upon oxidative stress. This chain is CDGSH iron-sulfur domain-containing protein 1 (Cisd1), found in Rattus norvegicus (Rat).